Consider the following 478-residue polypeptide: Protein nucleotidyltransferase YdiU (478 aa).

ATP contacts are provided by Gly-84, Gly-86, Arg-87, Lys-107, Asp-119, Gly-120, Arg-170, and Arg-177. The active-site Proton acceptor is the Asp-246. Residues Asn-247 and Asp-256 each contribute to the Mg(2+) site. Asp-256 contacts ATP.

It belongs to the SELO family. Mg(2+) serves as cofactor. The cofactor is Mn(2+).

It carries out the reaction L-seryl-[protein] + ATP = 3-O-(5'-adenylyl)-L-seryl-[protein] + diphosphate. The enzyme catalyses L-threonyl-[protein] + ATP = 3-O-(5'-adenylyl)-L-threonyl-[protein] + diphosphate. The catalysed reaction is L-tyrosyl-[protein] + ATP = O-(5'-adenylyl)-L-tyrosyl-[protein] + diphosphate. It catalyses the reaction L-histidyl-[protein] + UTP = N(tele)-(5'-uridylyl)-L-histidyl-[protein] + diphosphate. It carries out the reaction L-seryl-[protein] + UTP = O-(5'-uridylyl)-L-seryl-[protein] + diphosphate. The enzyme catalyses L-tyrosyl-[protein] + UTP = O-(5'-uridylyl)-L-tyrosyl-[protein] + diphosphate. Nucleotidyltransferase involved in the post-translational modification of proteins. It can catalyze the addition of adenosine monophosphate (AMP) or uridine monophosphate (UMP) to a protein, resulting in modifications known as AMPylation and UMPylation. This Escherichia coli O9:H4 (strain HS) protein is Protein nucleotidyltransferase YdiU.